A 390-amino-acid chain; its full sequence is Peroxisomal sarcosine oxidase (390 aa).

Position 9-39 (9-39) interacts with FAD; that stretch reads DAIVIGAGIQGCFTAYHLAKHRKRILLLEQF. Position 126 is an N6-acetyllysine (Lys126). At Cys319 the chain carries S-8alpha-FAD cysteine. A Microbody targeting signal motif is present at residues 388–390; the sequence is AHL.

Belongs to the MSOX/MTOX family. FAD serves as cofactor. Expressed in the liver and kidney.

The protein resides in the peroxisome. The catalysed reaction is sarcosine + O2 + H2O = formaldehyde + glycine + H2O2. The enzyme catalyses L-pipecolate + O2 = L-1-piperideine-6-carboxylate + H2O2 + H(+). Functionally, metabolizes sarcosine and L-pipecolic acid. The protein is Peroxisomal sarcosine oxidase (PIPOX) of Homo sapiens (Human).